The sequence spans 115 residues: Ribonuclease P protein component (115 aa).

Belongs to the RnpA family. As to quaternary structure, consists of a catalytic RNA component (M1 or rnpB) and a protein subunit.

The catalysed reaction is Endonucleolytic cleavage of RNA, removing 5'-extranucleotides from tRNA precursor.. RNaseP catalyzes the removal of the 5'-leader sequence from pre-tRNA to produce the mature 5'-terminus. It can also cleave other RNA substrates such as 4.5S RNA. The protein component plays an auxiliary but essential role in vivo by binding to the 5'-leader sequence and broadening the substrate specificity of the ribozyme. The sequence is that of Ribonuclease P protein component from Bacillus cereus (strain AH187).